We begin with the raw amino-acid sequence, 263 residues long: MKIILFDNKINSRLNKITLTNYAAKLDQTSEIWLFNCIENIQHIFFKSQLKSSHITKIFISGTSFEYTAGLPGLLSSLTLSGRLHPISIYSPQSLKKYLEACTKYSQTNFSFPINFHNLQYGGQVVNQFYTVICLPLSKKSLLYGFIILKKEKQGVFNLAQAKTLNILQGPIYGKLKEKDNFLSPDGYYLSGQDFSSNTIMGHKISLPLLVRYSRIISEMHWFCSYPIRLNTYSHQQGVKCLPHNVLTDIMKSQIYQDNSFVE.

The protein belongs to the AtsA family.

The protein resides in the plastid. Its subcellular location is the chloroplast. This is an uncharacterized protein from Pyropia yezoensis (Susabi-nori).